The following is a 261-amino-acid chain: Putative ketoacyl reductase (261 aa).

NADP(+) is bound by residues threonine 15, serine 16, isoleucine 18, arginine 38, glycine 39, aspartate 63, valine 64, asparagine 90, tyrosine 157, lysine 161, valine 190, and threonine 192. The active-site Proton acceptor is the tyrosine 157.

Belongs to the short-chain dehydrogenases/reductases (SDR) family. In terms of assembly, homotetramer.

It participates in antibiotic biosynthesis; actinorhodin biosynthesis. The polypeptide is Putative ketoacyl reductase (actIII) (Streptomyces coelicolor (strain ATCC BAA-471 / A3(2) / M145)).